The sequence spans 414 residues: 3-ketoacyl-CoA thiolase, peroxisomal (414 aa).

Residues Met1 to Thr9 constitute a peroxisome transit peptide. The PTS2-type peroxisomal targeting signal stretch occupies residues Met1–Thr9. The active-site Acyl-thioester intermediate is Cys115. Active-site proton acceptor residues include His370 and Cys400.

This sequence belongs to the thiolase-like superfamily. Thiolase family. In terms of assembly, homodimer. Interacts (via PTS2-type peroxisomal targeting signal region) with PEX7; leading to its translocation into peroxisomes.

It is found in the peroxisome. The enzyme catalyses an acyl-CoA + acetyl-CoA = a 3-oxoacyl-CoA + CoA. It functions in the pathway lipid metabolism; fatty acid metabolism. In terms of biological role, responsible for the thiolytic cleavage of straight chain 3-keto fatty acyl-CoAs (3-oxoacyl-CoAs). The polypeptide is 3-ketoacyl-CoA thiolase, peroxisomal (POT1) (Yarrowia lipolytica (strain CLIB 122 / E 150) (Yeast)).